The sequence spans 102 residues: Noncompact myelin-associated protein (102 aa).

Over methionine 1–glycine 30 the chain is Extracellular. The helical transmembrane segment at alanine 31–leucine 51 threads the bilayer. Residues lysine 52 to arginine 102 are Cytoplasmic-facing. The interval threonine 60 to arginine 102 is disordered. Positions glycine 78–phenylalanine 92 are enriched in polar residues.

Post-translationally, glycosylated.

Its subcellular location is the cell membrane. Functionally, plays a role in myelin formation. The polypeptide is Noncompact myelin-associated protein (NCMAP) (Homo sapiens (Human)).